A 105-amino-acid polypeptide reads, in one-letter code: Flagellar transcriptional regulator FlhD (105 aa).

It belongs to the FlhD family. Homodimer; disulfide-linked. Forms a heterohexamer composed of two FlhC and four FlhD subunits. Each FlhC binds a FlhD dimer, forming a heterotrimer, and a hexamer assembles by dimerization of two heterotrimers.

It is found in the cytoplasm. Functionally, functions in complex with FlhC as a master transcriptional regulator that regulates transcription of several flagellar and non-flagellar operons by binding to their promoter region. Activates expression of class 2 flagellar genes, including fliA, which is a flagellum-specific sigma factor that turns on the class 3 genes. Also regulates genes whose products function in a variety of physiological pathways. This Nitrosomonas eutropha (strain DSM 101675 / C91 / Nm57) protein is Flagellar transcriptional regulator FlhD.